A 432-amino-acid polypeptide reads, in one-letter code: Trigger factor (432 aa).

The PPIase FKBP-type domain occupies 161 to 246 (GKRVSIDFVG…VNKVEARQLP (86 aa)).

Belongs to the FKBP-type PPIase family. Tig subfamily.

Its subcellular location is the cytoplasm. It catalyses the reaction [protein]-peptidylproline (omega=180) = [protein]-peptidylproline (omega=0). Involved in protein export. Acts as a chaperone by maintaining the newly synthesized protein in an open conformation. Functions as a peptidyl-prolyl cis-trans isomerase. The polypeptide is Trigger factor (Vibrio vulnificus (strain CMCP6)).